The chain runs to 216 residues: MSVKIHYQNTHFITSAPDIRHLPADEGIEIAFAGRSNAGKSSALNRLTNQKNLAKTSKTPGRTQLINLFKVTEGCHIVDLPGYGFAQVPLEMKNKWQKSLGEYLQKRECLKGLVVLMDIRHPMKDLDQQMIFWAIESRIPVQVLLTKADKLKSGARKAELLKVRKLAETFGGDVQVDVYSSLKGLGVDQLRAKLDTWFAPALAHLQEDEEGSNSAE.

The EngB-type G domain occupies 26–200; that stretch reads EGIEIAFAGR…RAKLDTWFAP (175 aa). GTP contacts are provided by residues 34–41, 61–65, 79–82, 146–149, and 179–181; these read GRSNAGKS, GRTQL, DLPG, TKAD, and YSS. Serine 41 and threonine 63 together coordinate Mg(2+).

The protein belongs to the TRAFAC class TrmE-Era-EngA-EngB-Septin-like GTPase superfamily. EngB GTPase family. Mg(2+) serves as cofactor.

Its function is as follows. Necessary for normal cell division and for the maintenance of normal septation. The protein is Probable GTP-binding protein EngB of Vibrio vulnificus (strain YJ016).